Consider the following 316-residue polypeptide: tRNA dimethylallyltransferase (316 aa).

23–30 lines the ATP pocket; the sequence is GPTASGKS. 25 to 30 contributes to the substrate binding site; the sequence is TASGKS. Residues 48–51 are interaction with substrate tRNA; the sequence is DSMQ.

Belongs to the IPP transferase family. Monomer. The cofactor is Mg(2+).

It catalyses the reaction adenosine(37) in tRNA + dimethylallyl diphosphate = N(6)-dimethylallyladenosine(37) in tRNA + diphosphate. Functionally, catalyzes the transfer of a dimethylallyl group onto the adenine at position 37 in tRNAs that read codons beginning with uridine, leading to the formation of N6-(dimethylallyl)adenosine (i(6)A). In Rhodopseudomonas palustris (strain BisB18), this protein is tRNA dimethylallyltransferase.